The chain runs to 274 residues: MEALRQRIEAAFEARADITPSTVDANVRSDVQHVINMLDKGEVRVAEKIDGQWHVHQWLKKAVLLSFRIFDNAVIDGAETKYFDKVPLKFAEYDEARFKAEAIRVVPSATVRKGSFIGKNTVLMPSYVNLGAYVDEGTMVDTWATVGSCAQIGKNVHLSGGVGIGGVLEPLQAGPTIIEDNCFIGARSEIVEGVVVEEGSVISMGVYIGQSTRIYDRETGEVHYGRVPAGSVVVSGNLPSACGKYSLYAAIIVKKVDAKTRGKVGINELLRIVD.

Substrate-binding residues include Arg104 and Asp141.

Belongs to the transferase hexapeptide repeat family. In terms of assembly, homotrimer.

It localises to the cytoplasm. It catalyses the reaction (S)-2,3,4,5-tetrahydrodipicolinate + succinyl-CoA + H2O = (S)-2-succinylamino-6-oxoheptanedioate + CoA. Its pathway is amino-acid biosynthesis; L-lysine biosynthesis via DAP pathway; LL-2,6-diaminopimelate from (S)-tetrahydrodipicolinate (succinylase route): step 1/3. The chain is 2,3,4,5-tetrahydropyridine-2,6-dicarboxylate N-succinyltransferase from Shewanella putrefaciens (strain CN-32 / ATCC BAA-453).